Reading from the N-terminus, the 208-residue chain is Imidazole glycerol phosphate synthase subunit HisH (208 aa).

The Glutamine amidotransferase type-1 domain occupies 1-206 (MIVIVDYDTG…KEMTEDEALS (206 aa)). The Nucleophile role is filled by Cys-79. Active-site residues include His-181 and Glu-183.

In terms of assembly, heterodimer of HisH and HisF.

It localises to the cytoplasm. The catalysed reaction is 5-[(5-phospho-1-deoxy-D-ribulos-1-ylimino)methylamino]-1-(5-phospho-beta-D-ribosyl)imidazole-4-carboxamide + L-glutamine = D-erythro-1-(imidazol-4-yl)glycerol 3-phosphate + 5-amino-1-(5-phospho-beta-D-ribosyl)imidazole-4-carboxamide + L-glutamate + H(+). It catalyses the reaction L-glutamine + H2O = L-glutamate + NH4(+). It participates in amino-acid biosynthesis; L-histidine biosynthesis; L-histidine from 5-phospho-alpha-D-ribose 1-diphosphate: step 5/9. In terms of biological role, IGPS catalyzes the conversion of PRFAR and glutamine to IGP, AICAR and glutamate. The HisH subunit catalyzes the hydrolysis of glutamine to glutamate and ammonia as part of the synthesis of IGP and AICAR. The resulting ammonia molecule is channeled to the active site of HisF. This is Imidazole glycerol phosphate synthase subunit HisH from Lacticaseibacillus casei (strain BL23) (Lactobacillus casei).